Here is a 37-residue protein sequence, read N- to C-terminus: Islet amyloid polypeptide (37 aa).

C2 and C7 are joined by a disulfide. Y37 bears the Tyrosine amide mark.

The protein belongs to the calcitonin family. In terms of assembly, can form homodimers. Interacts with IDE and INS. Interaction with INS inhibits homodimerization and fibril formation.

It localises to the secreted. Functionally, amylin/IAPP is a glucoregulatory peptide hormone that plays an important role in the regulation of energy homeostasis. Selectively inhibits insulin-stimulated glucose utilization and glycogen deposition in muscle, while not affecting adipocyte glucose metabolism. IAPP function is mediated by the CALCR-RAMPs (AMYRs) receptor complexes. Amylin can also bind CALCR receptor in the absence of RAMPs, although it is more selective for AMYRs. This chain is Islet amyloid polypeptide (IAPP), found in Cricetulus griseus (Chinese hamster).